The primary structure comprises 772 residues: Heat shock protein 88 (772 aa).

2 disordered regions span residues 496-519 (TAAPAETPAETPANGEAAKPAEEK) and 729-772 (LGKP…DILD). Positions 497 to 513 (AAPAETPAETPANGEAA) are enriched in low complexity. Residues 735–772 (KPVEVPKEEPKDTPMESKDAPAEEPVATKDQKMDDILD) are compositionally biased toward basic and acidic residues.

This sequence belongs to the heat shock protein 70 family.

Its function is as follows. May function in protein folding and assembly, and disassembly of protein complexes. This Dictyostelium discoideum (Social amoeba) protein is Heat shock protein 88 (hspH).